Consider the following 528-residue polypeptide: Ulvan lyase, short isoform (528 aa).

Residues 1–29 (MKINLSMRELVSRLSTTLKTAIALSVLTA) form the signal peptide. A lipid anchor (N-palmitoyl cysteine) is attached at Cys-30. Cys-30 carries the S-diacylglycerol cysteine lipid modification. Residue 151–152 (SH) participates in substrate binding. Catalysis depends on His-152, which acts as the Proton donor/acceptor. Ca(2+) is bound by residues Asp-218, Asp-228, and Lys-230. Residues Tyr-309 and Arg-326 each contribute to the substrate site. Ca(2+)-binding residues include Asn-329, Asp-332, and Phe-334. His-390 is a substrate binding site.

Belongs to the polysaccharide lyase 24 family.

It is found in the secreted. The protein resides in the cell membrane. Functionally, ulvan lyase involved in ulvan degradation. Ulvan is the main polysaccharide component of the Ulvales (green seaweed) cell wall. It is composed of disaccharide building blocks comprising 3-sulfated rhamnose (Rha3S) linked to D-glucuronic acid (GlcA), L-iduronic acid (IduA), or D-xylose (Xyl). Ulvan lyase catalyzes preferentially the endolytic cleavage of the glycosidic bond between Rha3S and the uronic acid GlcA, but not IduA, producing oligosaccharides that have unsaturated 4-deoxy-L-threo-hex-4-enopyranosiduronic acid (deltaUA) at the non-reducing end. The most abundant end products in the degradation of the ulvan polysaccharide were deltaUA-Rha3S disaccharides and deltaUA-Rha3S-IduA-Rha3S and deltaUA-Rha3S-Xyl-Rha3S tetrasaccharides. This is Ulvan lyase, short isoform from Alteromonas sp. (strain LOR).